The following is a 781-amino-acid chain: Cytosolic phospholipase A2 beta (781 aa).

Positions 1 to 112 (MAVAEVSRTC…RAGEFRRESF (112 aa)) constitute a C2 domain. 5 residues coordinate Ca(2+): Asp-26, Asp-32, Asp-82, Asp-84, and Asp-90. The region spanning 246-781 (EAGLRELAVR…VQRRRQRRPH (536 aa)) is the PLA2c domain. Residue Ser-335 is the Nucleophile of the active site. Asp-615 acts as the Proton acceptor in catalysis.

Ca(2+) serves as cofactor. As to expression, widely expressed. Expressed at higher level in brain, heart, liver, cerebellum and pancreas.

The protein localises to the cytoplasm. It is found in the cytosol. The protein resides in the mitochondrion membrane. It localises to the early endosome membrane. It catalyses the reaction a 1,2-diacyl-sn-glycero-3-phosphocholine + H2O = a 1-acyl-sn-glycero-3-phosphocholine + a fatty acid + H(+). The catalysed reaction is a 1-acyl-sn-glycero-3-phosphocholine + H2O = sn-glycerol 3-phosphocholine + a fatty acid + H(+). It carries out the reaction 1-hexadecanoyl-2-(9Z,12Z-octadecadienoyl)-sn-glycero-3-phosphoethanolamine + H2O = 1-hexadecanoyl-sn-glycero-3-phosphoethanolamine + (9Z,12Z)-octadecadienoate + H(+). The enzyme catalyses 1-hexadecanoyl-2-(5Z,8Z,11Z,14Z-eicosatetraenoyl)-sn-glycero-3-phosphoethanolamine + H2O = 1-hexadecanoyl-sn-glycero-3-phosphoethanolamine + (5Z,8Z,11Z,14Z)-eicosatetraenoate + H(+). It catalyses the reaction 1-hexadecanoyl-sn-glycero-3-phosphocholine + H2O = sn-glycerol 3-phosphocholine + hexadecanoate + H(+). The catalysed reaction is 1-hexadecanoyl-2-(5Z,8Z,11Z,14Z-eicosatetraenoyl)-sn-glycero-3-phosphocholine + H2O = 1-hexadecanoyl-sn-glycero-3-phosphocholine + (5Z,8Z,11Z,14Z)-eicosatetraenoate + H(+). It carries out the reaction 1-hexadecanoyl-2-(5Z,8Z,11Z,14Z-eicosatetraenoyl)-sn-glycero-3-phosphocholine + H2O = 2-(5Z,8Z,11Z,14Z)-eicosatetraenoyl-sn-glycero-3-phosphocholine + hexadecanoate + H(+). Its activity is regulated as follows. Stimulated by cytosolic Ca(2+). Functionally, calcium-dependent phospholipase A1 and A2 and lysophospholipase that may play a role in membrane phospholipid remodeling. In terms of biological role, calcium-dependent phospholipase A2 and lysophospholipase. Cleaves the ester bond of the fatty acyl group attached to the sn-2 position of phosphatidylethanolamines, producing lysophospholipids that may be used in deacylation-reacylation cycles. Hydrolyzes lysophosphatidylcholines with low efficiency but is inefficient toward phosphatidylcholines. Its function is as follows. Calcium-dependent phospholipase A1 and A2 and lysophospholipase. Cleaves the ester bond of the fatty acyl group attached to the sn-1 or sn-2 position of diacyl phospholipids (phospholipase A1 and A2 activity, respectively), producing lysophospholipids that may be used in deacylation-reacylation cycles. Can further hydrolyze lysophospholipids enabling complete deacylation. Has no activity toward alkylacyl phospholipids. This Homo sapiens (Human) protein is Cytosolic phospholipase A2 beta (PLA2G4B).